The sequence spans 1180 residues: RecBCD enzyme subunit RecB (1180 aa).

Residues serine 2 to alanine 450 enclose the UvrD-like helicase ATP-binding domain. An ATPase, DNA-binding and helicase activity, interacts with RecC region spans residues serine 2–leucine 853. An ATP-binding site is contributed by alanine 23–threonine 30. The DNA-binding element occupies isoleucine 252–arginine 254. Tryptophan 447 is an ATP binding site. A UvrD-like helicase C-terminal domain is found at serine 480–glycine 746. 3 DNA-binding regions span residues valine 511–glycine 512, serine 560–arginine 561, and arginine 761. The tract at residues asparagine 900–alanine 1180 is nuclease activity, interacts with RecD and RecA. Histidine 956, aspartate 1067, aspartate 1080, and tyrosine 1081 together coordinate Mg(2+). Catalysis depends on aspartate 1080, which acts as the For nuclease activity.

This sequence belongs to the helicase family. UvrD subfamily. Heterotrimer of RecB, RecC and RecD. All subunits contribute to DNA-binding. The C-terminus interacts with RecA. Interacts with YgbT (Cas1). In terms of assembly, (Microbial infection) Lambda virus GamS protein interacts with the enzyme without displacing any of the subunits. It depends on Mg(2+) as a cofactor.

The enzyme catalyses Exonucleolytic cleavage (in the presence of ATP) in either 5'- to 3'- or 3'- to 5'-direction to yield 5'-phosphooligonucleotides.. It catalyses the reaction Couples ATP hydrolysis with the unwinding of duplex DNA by translocating in the 3'-5' direction.. It carries out the reaction ATP + H2O = ADP + phosphate + H(+). After reacting with DNA bearing a Chi site the holoenzyme is disassembled and loses exonuclease activity, DNA unwinding and Chi-directed DNA cleavage; RecB remains complexed with ssDNA, which may prevent holoenzyme reassembly. High levels of Mg(2+) (13 mM MgCl(2+)) or incubation with DNase allows holoenzyme reassembly, suggesting it is DNA bound to RecB that prevents reassembly. Its activity is regulated as follows. (Microbial infection) RecBCD is inhibited by the lambda virus gam protein (both GamL and GamS isoforms); in vitro a short preincubation prior to adding DNA results in maximal inhibition. Its function is as follows. A helicase/nuclease that prepares dsDNA breaks (DSB) for recombinational DNA repair. Binds to DSBs and unwinds DNA via a rapid (&gt;1 kb/second) and highly processive (&gt;30 kb) ATP-dependent bidirectional helicase. Unwinds dsDNA until it encounters a Chi (crossover hotspot instigator, 5'-GCTGGTGG-3') sequence from the 3' direction. Cuts ssDNA a few nucleotides 3' to Chi site, by nicking one strand or switching the strand degraded (depending on the reaction conditions). The properties and activities of the enzyme are changed at Chi. The Chi-altered holoenzyme produces a long 3'-ssDNA overhang which facilitates RecA-binding to the ssDNA for homologous DNA recombination and repair. Holoenzyme degrades any linearized DNA that is unable to undergo homologous recombination. In the holoenzyme this subunit contributes ATPase, 3'-5' helicase, exonuclease activity and loads RecA onto ssDNA. The RecBC complex requires the RecD subunit for nuclease activity, but can translocate along ssDNA in both directions. The RecBCD complex does not unwind G-quadruplex DNA. Probably interacts with a component of retron Ec48 which moniters RecBCD stability; when RecB is missing or impaired the retron is activated and becomes toxic. This Escherichia coli (strain K12) protein is RecBCD enzyme subunit RecB.